The chain runs to 463 residues: NADH dehydrogenase [ubiquinone] iron-sulfur protein 2, mitochondrial (463 aa).

Residues 1 to 33 (MAALRALCGFRGVAAQVLRPGAGVRLPIQPSRG) constitute a mitochondrion transit peptide. An N6-acetyllysine modification is found at lysine 62. The residue at position 118 (arginine 118) is a Symmetric dimethylarginine. Residues cysteine 326, cysteine 332, and cysteine 347 each coordinate [4Fe-4S] cluster.

Belongs to the complex I 49 kDa subunit family. As to quaternary structure, core subunit of respiratory chain NADH dehydrogenase (Complex I) which is composed of 45 different subunits. Component of the iron-sulfur (IP) fragment of the enzyme. Interacts with NDUFAF3. Interacts with NDUFAF7. Interacts with CERS2. [4Fe-4S] cluster serves as cofactor. Post-translationally, dimethylation at Arg-118 by NDUFAF7 takes place after NDUFS2 assembles into the complex I, leading to stabilize the early intermediate complex.

The protein resides in the mitochondrion inner membrane. The enzyme catalyses a ubiquinone + NADH + 5 H(+)(in) = a ubiquinol + NAD(+) + 4 H(+)(out). Its function is as follows. Core subunit of the mitochondrial membrane respiratory chain NADH dehydrogenase (Complex I) which catalyzes electron transfer from NADH through the respiratory chain, using ubiquinone as an electron acceptor. Essential for the catalytic activity and assembly of complex I. Redox-sensitive, critical component of the oxygen-sensing pathway in the pulmonary vasculature which plays a key role in acute pulmonary oxygen-sensing and hypoxic pulmonary vasoconstriction. Plays an important role in carotid body sensing of hypoxia. Essential for glia-like neural stem and progenitor cell proliferation, differentiation and subsequent oligodendrocyte or neuronal maturation. The protein is NADH dehydrogenase [ubiquinone] iron-sulfur protein 2, mitochondrial (NDUFS2) of Pan troglodytes (Chimpanzee).